A 531-amino-acid polypeptide reads, in one-letter code: Basal body-orientation factor 1 (531 aa).

Positions 1-19 are enriched in basic residues; that stretch reads MPKLKVKAGKGKKGKRKKA. A disordered region spans residues 1-32; it reads MPKLKVKAGKGKKGKRKKAGKNEHRLDKESEV. The span at 20 to 32 shows a compositional bias: basic and acidic residues; the sequence is GKNEHRLDKESEV. 2 coiled-coil regions span residues 26 to 213 and 274 to 365; these read LDKE…AEKA and VQEK…VESF. Residues 465–505 are disordered; the sequence is QSRKSPGLKPSPPADVSSIKEKEINTSNLEEKPEESSSTFI. Positions 482 to 499 are enriched in basic and acidic residues; that stretch reads SIKEKEINTSNLEEKPEE.

The protein belongs to the BBOF1 family. Multiciliated cells.

Its subcellular location is the cytoplasm. It is found in the cytoskeleton. The protein localises to the cilium basal body. In terms of biological role, basal body protein required in multiciliate cells to align and maintain cilia orientation in response to flow. May act by mediating a maturation step that stabilizes and aligns cilia orientation. Not required to respond to planar cell polarity (PCP) or flow-based orientation cues. The protein is Basal body-orientation factor 1 (ccdc176) of Xenopus laevis (African clawed frog).